Here is a 303-residue protein sequence, read N- to C-terminus: Aspartate carbamoyltransferase catalytic subunit (303 aa).

The carbamoyl phosphate site is built by R54 and T55. K82 serves as a coordination point for L-aspartate. Carbamoyl phosphate contacts are provided by R104, H132, and Q135. 2 residues coordinate L-aspartate: R165 and R221. Positions 261 and 262 each coordinate carbamoyl phosphate.

The protein belongs to the aspartate/ornithine carbamoyltransferase superfamily. ATCase family. As to quaternary structure, heterododecamer (2C3:3R2) of six catalytic PyrB chains organized as two trimers (C3), and six regulatory PyrI chains organized as three dimers (R2).

It catalyses the reaction carbamoyl phosphate + L-aspartate = N-carbamoyl-L-aspartate + phosphate + H(+). Its pathway is pyrimidine metabolism; UMP biosynthesis via de novo pathway; (S)-dihydroorotate from bicarbonate: step 2/3. Catalyzes the condensation of carbamoyl phosphate and aspartate to form carbamoyl aspartate and inorganic phosphate, the committed step in the de novo pyrimidine nucleotide biosynthesis pathway. This chain is Aspartate carbamoyltransferase catalytic subunit, found in Koribacter versatilis (strain Ellin345).